The sequence spans 510 residues: Cytochrome P450 monooxygenase btcC (510 aa).

The helical transmembrane segment at 1-21 (MSFPGVIFVVSFFPLLMGIAV) threads the bilayer. Residue cysteine 446 coordinates heme.

The protein belongs to the cytochrome P450 family. Requires heme as cofactor.

The protein resides in the membrane. It functions in the pathway secondary metabolite biosynthesis; terpenoid biosynthesis. In terms of biological role, cytochrome P450 monooxygenase; part of the gene cluster that mediates the biosynthesis of betaestacins. The bifunctional terpene synthase btcA converts isopentenyl diphosphate (IPP) and dimethylallyl diphosphate (DMAPP) into the sesterterpene betaestacin I. The C-terminal prenyltransferase (PT) domain of btcA catalyzes formation of GFPP, whereas the N-terminal terpene cyclase (TC) domain catalyzes the cyclization of GFPP into betaestacin I. The cytochrome P450 monooxygenase btcB is then responsible for the six-step oxidation of betaestacin I to yield betaestacin II. The roles of the cytochrome P450 monooxygenase btcC and the alpha-ketoglutarate-dependent dioxygenase btcD have not been identified yet. The polypeptide is Cytochrome P450 monooxygenase btcC (Neocamarosporium betae (Beet black rot fungus)).